A 230-amino-acid chain; its full sequence is Cell division ATP-binding protein FtsE (230 aa).

Positions 4–229 (IEMRDVVKKY…DESKGEYGYD (226 aa)) constitute an ABC transporter domain. Residue 37-44 (GPSGAGKS) coordinates ATP.

It belongs to the ABC transporter superfamily. Homodimer. Interacts with FtsX; forms a membrane-associated complex. Interacts with pcsB.

Its subcellular location is the cell membrane. The enzyme catalyses ATP + H2O = ADP + phosphate + H(+). In terms of biological role, part of the ABC transporter FtsEX involved in cellular division. Has ATPase activity. Essential for cell division and viability. The polypeptide is Cell division ATP-binding protein FtsE (Streptococcus pneumoniae serotype 2 (strain D39 / NCTC 7466)).